Reading from the N-terminus, the 470-residue chain is MNPNQKIITIGSICMAIGTISLILQIGNIISIWVSHSIQTGSQNHTGICNQRIITYENNTWVNQTYVNISNTNVVAGKDTTSMILAGNSSLCPIRGWAIYSKDNSIRIGSKGDVFVIREPFISCSHLECRTFFLTQGALLNDKHSNGTVKDRSPYRALMSCPIGEAPSPYNSRFESVAWSASACHDGMGWLTIGISGPDDGAVAVLKYNGIITEIIKSWRKQILRTQESECVCVNGSCFTIMTDGPSDGPASYRIFKIEKGKITKSIELDAPNSHYEECSCYPDTGKVMCVCRDNWHGSNRPWVSFNQNLDYQIGYICSGVFGDNPRPKDGKGSCDPVNVDGADGVKGFSYRYGNGVWIGRTKSNSSRKGFEMIWDPNGWTDTDGNFLVKQDVVAMTDWSGYSGSFVQHPELTGLDCMRPCFWVELIRGRPREKTTIWTSGSSISFCGVNSDTVNWSWPDGAELPFTIDK.

Residues 1-6 (MNPNQK) lie on the Intravirion side of the membrane. The helical transmembrane segment at 7-27 (IITIGSICMAIGTISLILQIG) threads the bilayer. The tract at residues 11–33 (GSICMAIGTISLILQIGNIISIW) is involved in apical transport and lipid raft association. At 28–470 (NIISIWVSHS…GAELPFTIDK (443 aa)) the chain is on the virion surface side. Residues 36-90 (HSIQTGSQNHTGICNQRIITYENNTWVNQTYVNISNTNVVAGKDTTSMILAGNSS) are hypervariable stalk region. 5 N-linked (GlcNAc...) asparagine; by host glycosylation sites follow: Asn-44, Asn-58, Asn-63, Asn-68, and Asn-88. The head of neuraminidase stretch occupies residues 91-470 (LCPIRGWAIY…GAELPFTIDK (380 aa)). Disulfide bonds link Cys-92–Cys-417, Cys-124–Cys-129, Cys-184–Cys-231, Cys-233–Cys-238, Cys-279–Cys-292, Cys-281–Cys-290, Cys-318–Cys-335, and Cys-421–Cys-447. Residue Arg-118 coordinates substrate. N-linked (GlcNAc...) asparagine; by host glycosylation is present at Asn-146. Asp-151 acts as the Proton donor/acceptor in catalysis. Position 152 (Arg-152) interacts with substrate. Asn-235 carries N-linked (GlcNAc...) asparagine; by host glycosylation. Residue 277–278 (EE) participates in substrate binding. Arg-293 is a substrate binding site. Residues Asp-294, Gly-298, and Asp-324 each contribute to the Ca(2+) site. N-linked (GlcNAc...) asparagine; by host glycosylation is present at Asn-365. Arg-368 lines the substrate pocket. The active-site Nucleophile is the Tyr-402. Residue Asn-455 is glycosylated (N-linked (GlcNAc...) asparagine; by host).

It belongs to the glycosyl hydrolase 34 family. As to quaternary structure, homotetramer. Ca(2+) is required as a cofactor. N-glycosylated.

The protein localises to the virion membrane. Its subcellular location is the host apical cell membrane. It carries out the reaction Hydrolysis of alpha-(2-&gt;3)-, alpha-(2-&gt;6)-, alpha-(2-&gt;8)- glycosidic linkages of terminal sialic acid residues in oligosaccharides, glycoproteins, glycolipids, colominic acid and synthetic substrates.. With respect to regulation, inhibited by the neuraminidase inhibitors zanamivir (Relenza) and oseltamivir (Tamiflu). These drugs interfere with the release of progeny virus from infected cells and are effective against all influenza strains. Resistance to neuraminidase inhibitors is quite rare. Functionally, catalyzes the removal of terminal sialic acid residues from viral and cellular glycoconjugates. Cleaves off the terminal sialic acids on the glycosylated HA during virus budding to facilitate virus release. Additionally helps virus spread through the circulation by further removing sialic acids from the cell surface. These cleavages prevent self-aggregation and ensure the efficient spread of the progeny virus from cell to cell. Otherwise, infection would be limited to one round of replication. Described as a receptor-destroying enzyme because it cleaves a terminal sialic acid from the cellular receptors. May facilitate viral invasion of the upper airways by cleaving the sialic acid moieties on the mucin of the airway epithelial cells. Likely to plays a role in the budding process through its association with lipid rafts during intracellular transport. May additionally display a raft-association independent effect on budding. Plays a role in the determination of host range restriction on replication and virulence. Sialidase activity in late endosome/lysosome traffic seems to enhance virus replication. The chain is Neuraminidase from Influenza A virus (strain A/USA:Albany/12/1951 H1N1).